Here is a 301-residue protein sequence, read N- to C-terminus: Tyrosine recombinase XerC (301 aa).

Positions 1 to 89 constitute a Core-binding (CB) domain; it reads MGLDGLAAYL…SWRQYCVWLV (89 aa). The region spanning 110-290 is the Tyr recombinase domain; sequence RVPKALPQEW…DFDHIARLYD (181 aa). Residues Arg151, Lys175, His242, Arg245, and His268 contribute to the active site. The O-(3'-phospho-DNA)-tyrosine intermediate role is filled by Tyr277.

It belongs to the 'phage' integrase family. XerC subfamily. Forms a cyclic heterotetrameric complex composed of two molecules of XerC and two molecules of XerD.

It localises to the cytoplasm. Functionally, site-specific tyrosine recombinase, which acts by catalyzing the cutting and rejoining of the recombining DNA molecules. The XerC-XerD complex is essential to convert dimers of the bacterial chromosome into monomers to permit their segregation at cell division. It also contributes to the segregational stability of plasmids. This Neisseria meningitidis serogroup B (strain ATCC BAA-335 / MC58) protein is Tyrosine recombinase XerC.